The following is a 112-amino-acid chain: Large ribosomal subunit protein P1 (112 aa).

Positions 80 to 112 are disordered; that stretch reads AAAAPAAESKKEEKKKEEESDQSDDDMGFGLFD. A compositionally biased stretch (basic and acidic residues) spans 87 to 97; it reads ESKKEEKKKEE. 2 positions are modified to phosphoserine: serine 99 and serine 102.

The protein belongs to the eukaryotic ribosomal protein P1/P2 family. In terms of assembly, P1 and P2 exist as dimers at the large ribosomal subunit.

In terms of biological role, plays an important role in the elongation step of protein synthesis. The polypeptide is Large ribosomal subunit protein P1 (RpLP1) (Drosophila melanogaster (Fruit fly)).